The following is a 217-amino-acid chain: Ras-related protein RABA5b (217 aa).

G19 to S26 is a GTP binding site. The short motif at S41–F49 is the Effector region element. GTP-binding positions include D67 to Q71, N125 to D128, and S155 to A156. Residues C214 and C215 are each lipidated (S-geranylgeranyl cysteine).

This sequence belongs to the small GTPase superfamily. Rab family.

The protein localises to the cell membrane. Intracellular vesicle trafficking and protein transport. This chain is Ras-related protein RABA5b (RABA5B), found in Arabidopsis thaliana (Mouse-ear cress).